The sequence spans 224 residues: Urease accessory protein UreF (224 aa).

The protein belongs to the UreF family. In terms of assembly, ureD, UreF and UreG form a complex that acts as a GTP-hydrolysis-dependent molecular chaperone, activating the urease apoprotein by helping to assemble the nickel containing metallocenter of UreC. The UreE protein probably delivers the nickel.

It localises to the cytoplasm. In terms of biological role, required for maturation of urease via the functional incorporation of the urease nickel metallocenter. The chain is Urease accessory protein UreF from Klebsiella pneumoniae subsp. pneumoniae (strain ATCC 700721 / MGH 78578).